The primary structure comprises 471 residues: DENN domain-containing protein 2D (471 aa).

The uDENN domain occupies 55-204 (EYLLVVSLKK…AFPAPGKTVT (150 aa)). The cDENN domain occupies 226–359 (HLEHVDFSSL…LQDDILDSLG (134 aa)). The 85-residue stretch at 361 to 445 (GINELKTAEQ…QEAEKSKNPP (85 aa)) folds into the dDENN domain.

As to expression, in bronchial mucosa, mainly expressed in ciliated and basal epithelial cells and weakly in alveolar cells (at protein level). Tends to be down-regulated in lung cancers, immortalized bronchial epithelial cell lines and precancerous lesions.

Its subcellular location is the cytoplasm. Guanine nucleotide exchange factor (GEF) which may activate RAB9A and RAB9B. Promotes the exchange of GDP to GTP, converting inactive GDP-bound Rab proteins into their active GTP-bound form. This Homo sapiens (Human) protein is DENN domain-containing protein 2D (DENND2D).